A 2969-amino-acid polypeptide reads, in one-letter code: Histone-lysine N-methyltransferase ASH1L (2969 aa).

Disordered stretches follow at residues 1–70 (MDPR…TDAQ) and 118–143 (HPRK…RDPS). Residues 21–31 (KSPSAISTGTL) are compositionally biased toward polar residues. Ser22 is subject to Phosphoserine. 2 stretches are compositionally biased toward basic and acidic residues: residues 33–65 (SKRE…KDDG) and 127–143 (KMTD…RDPS). Residue Lys34 forms a Glycyl lysine isopeptide (Lys-Gly) (interchain with G-Cter in SUMO2) linkage. N6-acetyllysine is present on Lys375. Lys425 participates in a covalent cross-link: Glycyl lysine isopeptide (Lys-Gly) (interchain with G-Cter in SUMO2). Polar residues predominate over residues 501 to 511 (IQQDSFSSSEK). Disordered stretches follow at residues 501–525 (IQQD…QPPV), 537–583 (ASDV…PNPL), 824–845 (YKPK…PPKR), 878–966 (KQGL…EMEP), 1100–1128 (SEIL…AGFV), 1151–1231 (MKKA…EHVS), and 1243–1281 (SLKE…QLRN). Residues 512–522 (GSYETSKHEKQ) are compositionally biased toward basic and acidic residues. The segment covering 554 to 579 (NLPSPSPTVSVNPLTRSPPETSSQLA) has biased composition (polar residues). Positions 887–897 (PKKRGRPKRQM) are enriched in basic residues. The segment at residues 887-899 (PKKRGRPKRQMRS) is a DNA-binding region (a.T hook 1). Basic and acidic residues predominate over residues 920-932 (SKLESESDNHRSS). A compositionally biased stretch (acidic residues) spans 936-949 (FESEDQLQDPDDLD). 2 stretches are compositionally biased toward low complexity: residues 1100–1123 (SEIL…PVSS) and 1162–1175 (SPPT…SHLS). A phosphoserine mark is found at Ser1162 and Ser1170. The span at 1186 to 1211 (SPISESHSDETIPSDSGIGTDNNSTS) shows a compositional bias: polar residues. Gln1220 carries the post-translational modification N5-methylglutamine. Basic residues-rich tracts occupy residues 1246-1256 (EKHKHKCKRRN) and 1266-1277 (KRQKRKRKKKYP). Positions 1347–1359 (KKKRGRPPKMREA) form a DNA-binding region, a.T hook 2. 3 disordered regions span residues 1489–1508 (HREH…GSSR), 1580–1711 (SESS…ASGD), and 1741–1761 (ASAP…TLGK). Composition is skewed to polar residues over residues 1496 to 1508 (EQPQ…GSSR), 1580 to 1598 (SESS…SEPA), 1605 to 1622 (NLFT…PNSS), and 1650 to 1680 (LPSN…STNC). Low complexity predominate over residues 1741–1751 (ASAPPSSSPGR). Residues 1847-1859 (KRRPGRPRKCPLQ) constitute a DNA-binding region (a.T hook 3). The segment at 1911–1991 (KKGLKRKGWL…PRPPKKKYQK (81 aa)) is disordered. The catalytic domain stretch occupies residues 2069 to 2288 (PDVPLYKKIR…KCRGIIGGKS (220 aa)). One can recognise an AWS domain in the interval 2091–2142 (YEATTCNCKKPDDDTRKGCVDDCLNRMIFAECSPNTCPCGEQCCNQRIQRHE). The SET domain maps to 2145 to 2261 (QCLERFRAEE…AGTELTYDYN (117 aa)). One can recognise a Post-SET domain in the interval 2269-2285 (KQQLCKCGFEKCRGIIG). Residues 2288 to 2346 (SQRVNGLTSSKNSQPMATHKKSGRSKEKRKSKHKLKKRRGHLSEEPSENINTPTRLTPQ) are disordered. The span at 2289–2303 (QRVNGLTSSKNSQPM) shows a compositional bias: polar residues. Residues 2305-2327 (THKKSGRSKEKRKSKHKLKKRRG) show a composition bias toward basic residues. 3 positions are modified to N6-acetyllysine: Lys2317, Lys2319, and Lys2323. The segment covering 2335–2346 (ENINTPTRLTPQ) has biased composition (polar residues). In terms of domain architecture, Bromo spans 2444–2550 (RLAQIFKEIC…KAYYNARHEA (107 aa)). The PHD-type zinc finger occupies 2585–2631 (VIRCICGLYKDEGLMIQCDKCMVWQHCDCMGVNSDVEHYLCEQCDPR). A BAH domain is found at 2661–2798 (LLLRQGDCVY…KSAHLFYKIH (138 aa)). Disordered stretches follow at residues 2825-2856 (SPHY…DLGQ) and 2876-2919 (NEIP…RRHN). Residues 2842 to 2855 (WKSERSKPPLKDLG) show a composition bias toward basic and acidic residues.

It belongs to the class V-like SAM-binding methyltransferase superfamily. Histone-lysine methyltransferase family. SET2 subfamily. Post-translationally, methylated at Gln-1220 by N6AMT1. As to expression, widely expressed, with highest level in brain, heart and kidney.

It is found in the nucleus. It localises to the cell junction. The protein localises to the tight junction. Its subcellular location is the chromosome. It carries out the reaction L-lysyl(36)-[histone H3] + 3 S-adenosyl-L-methionine = N(6),N(6),N(6)-trimethyl-L-lysyl(36)-[histone H3] + 3 S-adenosyl-L-homocysteine + 3 H(+). It catalyses the reaction L-lysyl(9)-[histone H3] + S-adenosyl-L-methionine = N(6)-methyl-L-lysyl(9)-[histone H3] + S-adenosyl-L-homocysteine + H(+). Functionally, histone methyltransferase specifically trimethylating 'Lys-36' of histone H3 forming H3K36me3. Also monomethylates 'Lys-9' of histone H3 (H3K9me1) in vitro. The physiological significance of the H3K9me1 activity is unclear. This chain is Histone-lysine N-methyltransferase ASH1L (ASH1L), found in Homo sapiens (Human).